The chain runs to 274 residues: 4-hydroxy-tetrahydrodipicolinate reductase (274 aa).

Residues 8–13 (GALGRM), Glu-34, 102–104 (GTT), and 128–131 (SQNF) contribute to the NAD(+) site. The active-site Proton donor/acceptor is His-160. A (S)-2,3,4,5-tetrahydrodipicolinate-binding site is contributed by His-161. Lys-164 acts as the Proton donor in catalysis. 170 to 171 (GT) is a binding site for (S)-2,3,4,5-tetrahydrodipicolinate.

This sequence belongs to the DapB family.

The protein localises to the cytoplasm. It carries out the reaction (S)-2,3,4,5-tetrahydrodipicolinate + NAD(+) + H2O = (2S,4S)-4-hydroxy-2,3,4,5-tetrahydrodipicolinate + NADH + H(+). The enzyme catalyses (S)-2,3,4,5-tetrahydrodipicolinate + NADP(+) + H2O = (2S,4S)-4-hydroxy-2,3,4,5-tetrahydrodipicolinate + NADPH + H(+). Its pathway is amino-acid biosynthesis; L-lysine biosynthesis via DAP pathway; (S)-tetrahydrodipicolinate from L-aspartate: step 4/4. Functionally, catalyzes the conversion of 4-hydroxy-tetrahydrodipicolinate (HTPA) to tetrahydrodipicolinate. The sequence is that of 4-hydroxy-tetrahydrodipicolinate reductase from Methanocaldococcus jannaschii (strain ATCC 43067 / DSM 2661 / JAL-1 / JCM 10045 / NBRC 100440) (Methanococcus jannaschii).